Consider the following 390-residue polypeptide: Guanine nucleotide exchange factor for Rab-3A (390 aa).

The segment at 1–60 (MWSGQPHPDEGHPPPLEAVPVPWKSVGPCKSHRESLGGLPETPAGEEAQGEEGPAATQLD) is disordered. Low complexity predominate over residues 40-58 (PETPAGEEAQGEEGPAATQ). Residues 73–161 (EKGSEFLKEE…AEVTALKTLV (89 aa)) are a coiled coil. Residues 166 to 194 (PASPNRELHPQLLSPTKAGPRKGHLRHKS) are disordered. Phosphoserine is present on residues serine 168 and serine 179. Residues 184–194 (GPRKGHLRHKS) show a composition bias toward basic residues.

This sequence belongs to the SEC2 family. In terms of assembly, interacts with RAB3A and IHPK1 through the coiled-coil domain. This interaction is competitive. IHPK1 kinase activity is not required for this interaction.

Guanine nucleotide exchange factor (GEF) which may activate RAB3A, a GTPase that regulates synaptic vesicle exocytosis. Promotes the exchange of GDP to GTP, converting inactive GDP-bound Rab proteins into their active GTP-bound form. May also activate RAB8A and RAB8B. The chain is Guanine nucleotide exchange factor for Rab-3A (RAB3IL1) from Bos taurus (Bovine).